Here is a 459-residue protein sequence, read N- to C-terminus: Mitochondrial distribution and morphology protein 10 (459 aa).

Belongs to the MDM10 family. In terms of assembly, component of the ER-mitochondria encounter structure (ERMES) or MDM complex, composed of mmm1, mdm10, mdm12 and mdm34. Associates with the mitochondrial outer membrane sorting assembly machinery SAM(core) complex.

It is found in the mitochondrion outer membrane. Component of the ERMES/MDM complex, which serves as a molecular tether to connect the endoplasmic reticulum and mitochondria. Components of this complex are involved in the control of mitochondrial shape and protein biogenesis and may function in phospholipid exchange. mdm10 is involved in the late assembly steps of the general translocase of the mitochondrial outer membrane (TOM complex). Functions in the tom40-specific route of the assembly of outer membrane beta-barrel proteins, including the association of tom40 with the receptor tom22 and small TOM proteins. Can associate with the SAM(core) complex as well as the mdm12-mmm1 complex, both involved in late steps of the major beta-barrel assembly pathway, that is responsible for biogenesis of all outer membrane beta-barrel proteins. May act as a switch that shuttles between both complexes and channels precursor proteins into the tom40-specific pathway. Plays a role in mitochondrial morphology and in the inheritance of mitochondria. This is Mitochondrial distribution and morphology protein 10 (mdmB) from Aspergillus terreus (strain NIH 2624 / FGSC A1156).